The following is a 362-amino-acid chain: Histidine protein methyltransferase 1 homolog (362 aa).

A disordered region spans residues 28–89 (KSQKGKEDKN…ACEKQPSLKP (62 aa)). Residues 55 to 73 (SLGSAASSEDTDSPPSTAD) show a composition bias toward polar residues. 2 positions are modified to phosphoserine: serine 62 and serine 67. Tele-methylhistidine is present on histidine 144. S-adenosyl-L-methionine is bound by residues 158-162 (IWECT), glycine 185, and 206-208 (QDY). The Nuclear localization signal signature appears at 237–243 (PAGKRQR). Residues 259–261 (GEW) and serine 283 contribute to the S-adenosyl-L-methionine site.

It belongs to the methyltransferase superfamily. METTL18 family. In terms of assembly, interacts with GRWD1 and members of the heat shock protein 90 and 70 families; these proteins may possibly be methylation substrates for the enzyme. In terms of processing, monomethylated at His-144 through automethylation. Automethylation at His-144 positively regulates the methyltransferase activity toward RPL3. Probably methylated on other residues.

The protein resides in the cytoplasm. It is found in the cytosol. Its subcellular location is the nucleus. It localises to the nucleolus. The catalysed reaction is L-histidyl-[protein] + S-adenosyl-L-methionine = N(tele)-methyl-L-histidyl-[protein] + S-adenosyl-L-homocysteine + H(+). Protein-L-histidine N-tele-methyltransferase that specifically monomethylates RPL3, thereby regulating translation elongation. Histidine methylation of RPL3 regulates translation elongation by slowing ribosome traversal on tyrosine codons: slower elongation provides enough time for proper folding of synthesized proteins and prevents cellular aggregation of tyrosine-rich proteins. The sequence is that of Histidine protein methyltransferase 1 homolog from Rattus norvegicus (Rat).